The following is a 1101-amino-acid chain: Rho guanine nucleotide exchange factor gef2 (1101 aa).

A disordered region spans residues 203 to 222; that stretch reads EDSRKKTSSPSPSFASSKDA. Residues 210–219 show a composition bias toward low complexity; the sequence is SSPSPSFASS. The region spanning 230-428 is the DH domain; sequence KKKSLLIEMM…KNIAEMPTVD (199 aa). Phosphoserine is present on residues Ser-736 and Ser-977.

Its subcellular location is the cytoplasm. It localises to the cytoskeleton. The protein resides in the microtubule organizing center. It is found in the spindle pole body. Functionally, has a role in the control of cell polarity and cytokinesis. Involved in bipolar growth and septum formation. The protein is Rho guanine nucleotide exchange factor gef2 (gef2) of Schizosaccharomyces pombe (strain 972 / ATCC 24843) (Fission yeast).